Here is a 181-residue protein sequence, read N- to C-terminus: MKNTSIKTVVAIGIGAALFVIIGLFVPITIFTNTTISLQYAVQALFSVLFGPVAGFFIGFIGHMLKDMFAGYGVWWSWVLPSGLVGLGIGSLKNRLKVDKGIFSKKDILSFNLVQALVNLISWAIVAPLGDILIYQEPANKVFTQGLFAAFANTFTIGIGGTLLLIAYANSRPKAGSLRKD.

A run of 5 helical transmembrane segments spans residues 11–31 (AIGI…ITIF), 45–65 (LFSV…GHML), 69–89 (FAGY…GLGI), 114–134 (VQAL…DILI), and 147–167 (LFAA…LLIA).

It belongs to the UPF0397 family.

It is found in the cell membrane. The protein is UPF0397 protein SUB0313 of Streptococcus uberis (strain ATCC BAA-854 / 0140J).